The sequence spans 221 residues: MSSSQKKAGGKAGKPTKRSQNYAALRKAQLPKPPALKVPVVKPTNTILPQTGCVWQSLGTPLSLSSFNGLGVRFLYSFLKDFAGPRILEEDLIYRMVFSITPSYAGTFCLTDDVTTEDGRAVAHGNPMQEFPHGAFHANEKFGFELVFTAPTHAGMQNQNFKHSYAVALCLDFDAQPEGSKNPSYRFNEVWVERKAFPRAGPLRSLITVGLLDEADDLDRH.

The disordered stretch occupies residues 1–24 (MSSSQKKAGGKAGKPTKRSQNYAA). At S2 the chain carries N-acetylserine; by host.

Belongs to the alphamovirus/ilarvirus capsid protein family.

The protein resides in the virion. Capsid protein. Binds to the to the 3' end of the nonpolyadenylated viral RNA and is involved in viral RNA translation initiation. Probably binds RNA and plays a role in packaging. The polypeptide is Capsid protein (Alfalfa mosaic virus (AMV)).